Reading from the N-terminus, the 86-residue chain is Large ribosomal subunit protein bL27 (86 aa).

Positions 1–26 (MAHKKAAGSTRNGRDSESKRLGVKRY) are disordered.

Belongs to the bacterial ribosomal protein bL27 family.

The polypeptide is Large ribosomal subunit protein bL27 (Marinobacter nauticus (strain ATCC 700491 / DSM 11845 / VT8) (Marinobacter aquaeolei)).